The primary structure comprises 1904 residues: Pericentriolar material 1 protein (1904 aa).

Disordered stretches follow at residues 1–135, 159–179, 265–303, 338–361, 376–407, 430–489, and 520–559; these read MATG…SGEP, QEDGRGEPTMDSSQARDPQQE, HDSQTQSVPDNRRQAESLSLTREISQSRNSSVSEHQSDE, NSSFFPASSSPQRSIDQRSTTSAA, NSLASAPYPPDSLASQNESEEDDNLNPTEKLQ, SDMM…GTNN, and CHNREDDKHADLPHGEDDEVEEDRASEDSMSSHRSSLGDV. Basic and acidic residues predominate over residues 43-60; sequence RSSEKNKKKLGGEAETRL. Residues 107-118 show a composition bias toward polar residues; it reads INFSDLDQINTN. Positions 171–212 form a coiled coil; it reads SQARDPQQEAKEELENLKKQHDLLKRMLQQQEQLKALQGRQA. Residues 280–298 show a composition bias toward polar residues; it reads ESLSLTREISQSRNSSVSE. A coiled-coil region spans residues 301-334; that stretch reads SDEKAQLFNKMRMLQGKKQKMDKLLGELHTLRDQ. A compositionally biased stretch (low complexity) spans 338-348; that stretch reads NSSFFPASSSP. A compositionally biased stretch (polar residues) spans 349 to 361; that stretch reads QRSIDQRSTTSAA. The stretch at 403 to 429 forms a coiled coil; that stretch reads TEKLQKLNEVRKRLNELRELVHYYEQT. Residues 442 to 452 show a composition bias toward acidic residues; that stretch reads KEEEETEDSGS. Residues 461–470 show a composition bias toward polar residues; that stretch reads PVTNIRNPQG. The segment covering 471-482 has biased composition (low complexity); the sequence is ISSWSEINSNSN. The span at 520 to 534 shows a compositional bias: basic and acidic residues; that stretch reads CHNREDDKHADLPHG. Over residues 535–544 the composition is skewed to acidic residues; the sequence is EDDEVEEDRA. Coiled-coil stretches lie at residues 562–592 and 636–686; these read DAEFEQKINRLMAAKQKLRQLQNLAAMVQDD and LNEK…LQSA. The disordered stretch occupies residues 686–706; that stretch reads AGLGNSPANRQTSPATSTPAM. The span at 687 to 706 shows a compositional bias: polar residues; it reads GLGNSPANRQTSPATSTPAM. A coiled-coil region spans residues 731–768; it reads SEMRRHEILREELRRRRKQLEALMAEHQRRRELAETIS. The segment at 773–840 is disordered; sequence SVKSEGSEAQ…PSMNDSFSAY (68 aa). Positions 779–804 are enriched in polar residues; that stretch reads SEAQRTPQQSRTENRTMATWGGSTQC. A compositionally biased stretch (acidic residues) spans 806 to 830; it reads LDEEDGDEDGYLSDGLDQAEEEEDA. Coiled-coil stretches lie at residues 895-927 and 970-1000; these read SELSYVEEKEQWQEQINQLKKQLEFSVSICQTL and TQLSWQQNNVQRLKQMLNDLMHQQEQQCQEK. 3 disordered regions span residues 991–1018, 1063–1082, and 1088–1225; these read HQQEQQCQEKPSRKERGSSAPPPPSPVF, GFPQSSEQQQHPLDHNASGK, and FPKP…TGYD. Polar residues-rich tracts occupy residues 1064-1073 and 1093-1102; these read FPQSSEQQQH and ESSSSTGAEN. The segment covering 1103-1117 has biased composition (basic and acidic residues); it reads QRSHRQPEDEVEKRS. Residues 1141 to 1150 are compositionally biased toward polar residues; it reads SVQSIASGHK. A compositionally biased stretch (basic and acidic residues) spans 1151 to 1162; it reads NQSDTSRRRNFD. A compositionally biased stretch (low complexity) spans 1173–1182; that stretch reads PDPVDPTTVT. Positions 1421–1447 form a coiled coil; sequence IHLDQALARMREYERMKIEAESTLDSE. Residues 1616-1625 show a composition bias toward basic and acidic residues; the sequence is AKEDKDETET. Disordered stretches follow at residues 1616–1741, 1774–1838, and 1865–1904; these read AKED…VKGE, MKTE…SDED, and EAQTNSLSDELLGGGGEQDRELVGDAQTLKEPETFGAQSA. Residues 1649–1658 show a composition bias toward acidic residues; the sequence is SDQEEDEESE. Over residues 1668–1678 the composition is skewed to polar residues; that stretch reads KAETQALTNYG. The span at 1680–1695 shows a compositional bias: acidic residues; it reads GEDENEDEEIEFEEGP. 3 stretches are compositionally biased toward polar residues: residues 1698–1720, 1728–1737, and 1779–1791; these read VQTSLQASSETATENEQISSQEL, ILSSEQQSVN, and SSSSLPGNETQML. A compositionally biased stretch (low complexity) spans 1800–1812; that stretch reads SSAGSSESSMAGS. Residues 1881 to 1897 show a composition bias toward basic and acidic residues; sequence EQDRELVGDAQTLKEPE.

This sequence belongs to the PCM1 family. Self-associates.

It is found in the cytoplasm. It localises to the cytoskeleton. The protein localises to the microtubule organizing center. Its subcellular location is the centrosome. The protein resides in the cytoplasmic granule. It is found in the centriolar satellite. It localises to the cilium basal body. In terms of biological role, required for centrosome assembly and function. Essential for the correct localization of several centrosomal proteins including CETN3 and PCNT. Required to anchor microtubules to the centrosome. Probably involved in the biogenesis of cilia. The polypeptide is Pericentriolar material 1 protein (PCM1) (Gallus gallus (Chicken)).